Consider the following 265-residue polypeptide: Mlc titration factor A (265 aa).

4 residues coordinate Zn(2+): His-111, His-148, His-152, and Glu-211.

Belongs to the MtfA family. Interacts with Mlc. Requires Zn(2+) as cofactor.

The protein localises to the cytoplasm. Its function is as follows. Involved in the modulation of the activity of the glucose-phosphotransferase system (glucose-PTS). Interacts with the transcriptional repressor Mlc, preventing its interaction with DNA and leading to the modulation of expression of genes regulated by Mlc, including ptsG, which encodes the PTS system glucose-specific EIICB component. Shows zinc-dependent metallopeptidase activity. In Escherichia coli O17:K52:H18 (strain UMN026 / ExPEC), this protein is Mlc titration factor A.